Here is a 118-residue protein sequence, read N- to C-terminus: MARIAGINIPDQKHAVIALTAIYGIGKTRSQAILAEVGIAEDVKISELTEEQIDQLRDGVAKYTVEGDLRREVSMNIKRLMDLGCYRGLRHRRSLPLRGQRTKTNARTRKGPRKPIKK.

The segment at Ser94 to Lys118 is disordered.

Belongs to the universal ribosomal protein uS13 family. As to quaternary structure, part of the 30S ribosomal subunit. Forms a loose heterodimer with protein S19. Forms two bridges to the 50S subunit in the 70S ribosome.

Functionally, located at the top of the head of the 30S subunit, it contacts several helices of the 16S rRNA. In the 70S ribosome it contacts the 23S rRNA (bridge B1a) and protein L5 of the 50S subunit (bridge B1b), connecting the 2 subunits; these bridges are implicated in subunit movement. Contacts the tRNAs in the A and P-sites. The sequence is that of Small ribosomal subunit protein uS13 from Vibrio parahaemolyticus serotype O3:K6 (strain RIMD 2210633).